The chain runs to 154 residues: Ribosomal RNA large subunit methyltransferase H (154 aa).

Gly-103 is an S-adenosyl-L-methionine binding site.

This sequence belongs to the RNA methyltransferase RlmH family. As to quaternary structure, homodimer.

The protein resides in the cytoplasm. The catalysed reaction is pseudouridine(1915) in 23S rRNA + S-adenosyl-L-methionine = N(3)-methylpseudouridine(1915) in 23S rRNA + S-adenosyl-L-homocysteine + H(+). Functionally, specifically methylates the pseudouridine at position 1915 (m3Psi1915) in 23S rRNA. This is Ribosomal RNA large subunit methyltransferase H from Gemmatimonas aurantiaca (strain DSM 14586 / JCM 11422 / NBRC 100505 / T-27).